We begin with the raw amino-acid sequence, 414 residues long: Phospholipid-transporting ATPase accessory subunit LEM3 (414 aa).

The tract at residues 1–50 (MVNFDLGQVGEVFRRKDKGAIVSGDNPEEEEDVDASEFEEDEVKPVRTKN) is required for localization to the plasma membrane. At 1–74 (MVNFDLGQVG…AINPVLTPRT (74 aa)) the chain is on the cytoplasmic side. Positions 20-52 (AIVSGDNPEEEEDVDASEFEEDEVKPVRTKNRR) are disordered. Acidic residues predominate over residues 26–42 (NPEEEEDVDASEFEEDE). Position 36 is a phosphoserine (S36). A helical membrane pass occupies residues 75 to 95 (VLPLYLLIAVVFVIVGGCILA). At 96 to 372 (QNSKVDEVTI…HGSHLGGRNP (277 aa)) the chain is on the extracellular side. Intrachain disulfides connect C110/C159 and C216/C231. A glycan (N-linked (GlcNAc...) asparagine) is linked at N113. N-linked (GlcNAc...) asparagine glycosylation is found at N240, N256, N279, N298, and N332. The chain crosses the membrane as a helical span at residues 373–393 (FLGIVYLIGGCICAAMALILL). The Cytoplasmic segment spans residues 394–414 (TFWLFGGRKIADASSLSWNMK). The required for localization to the plasma membrane stretch occupies residues 400–414 (GRKIADASSLSWNMK).

Belongs to the CDC50/LEM3 family. Component of a flippase complex consisting of DNF1 or DNF2 and LEM3. Interacts with DNF1; the interaction is direct and required for their mutual export from the endoplasmic reticulum. Interacts with DNF2; the interaction is direct and required for their mutual export from the endoplasmic reticulum.

Its subcellular location is the cell membrane. Accessory component of a P4-ATPase flippase complex which catalyzes the hydrolysis of ATP coupled to the transport of glucosylceramide, phosphatidylcholine, phosphatidylethanolamine, and small amounts of phosphatidylserine from the lumenal to the cytosolic leaflet of the cell membrane and ensures the maintenance of asymmetric distribution of phospholipids. Contributes to substrate binding and specificity of the P4-ATPase catalytic subunit. The protein is Phospholipid-transporting ATPase accessory subunit LEM3 of Saccharomyces cerevisiae (strain ATCC 204508 / S288c) (Baker's yeast).